Consider the following 79-residue polypeptide: Panulirin (79 aa).

Residues 1–22 (MKNKAVLMLMALFLVAVTQVHG) form the signal peptide. Residues 23–26 (DPEP) constitute a propeptide that is removed on maturation. Cystine bridges form between cysteine 33–cysteine 63, cysteine 40–cysteine 56, and cysteine 46–cysteine 64. Positions 75–79 (QLLAA) are excised as a propeptide.

In terms of assembly, monomer. Post-translationally, contains 3 disulfide bonds. In terms of tissue distribution, expressed in hemocytes (at protein level).

Its function is as follows. Involved in the melanization cascade in response to lipopolysaccharide (LPS). In vitro, reversibly and competitively inhibits trypsin (Ki=8.6 nM) but not serine proteases chymotrypsin, elastase, subtilisin, thrombin and plasmin, cysteine peptidase papain or metallopeptidase carboxypeptidase A. This is Panulirin from Panulirus argus (Caribbean spiny lobster).